We begin with the raw amino-acid sequence, 85 residues long: Probable Sec-independent protein translocase protein TatE (85 aa).

A helical transmembrane segment spans residues 1–21 (MEGLSITKLLVVGILIVLLFG). Residues 64–85 (KTVAETKAASDSQAAASVERKD) are disordered.

This sequence belongs to the TatA/E family. TatE subfamily.

Its subcellular location is the cell inner membrane. Functionally, part of the twin-arginine translocation (Tat) system that transports large folded proteins containing a characteristic twin-arginine motif in their signal peptide across membranes. TatE shares overlapping functions with TatA. The protein is Probable Sec-independent protein translocase protein TatE of Yersinia pestis.